A 183-amino-acid chain; its full sequence is Der GTPase-activating protein YihI (183 aa).

Residues 1-101 (MSRSKKTRKG…KLTDEQKLLK (101 aa)) are disordered. 2 stretches are compositionally biased toward basic and acidic residues: residues 22-46 (KKQDRAEVTGKRAEKGNKSGSRHNE) and 92-101 (KLTDEQKLLK).

It belongs to the YihI family. In terms of assembly, interacts with Der.

In terms of biological role, a GTPase-activating protein (GAP) that modifies Der/EngA GTPase function. May play a role in ribosome biogenesis. The protein is Der GTPase-activating protein YihI of Shewanella oneidensis (strain ATCC 700550 / JCM 31522 / CIP 106686 / LMG 19005 / NCIMB 14063 / MR-1).